Reading from the N-terminus, the 338-residue chain is Lipoate-protein ligase A (338 aa).

Residues 29 to 216 (PATQRVLFLW…AFFAHYGEHV (188 aa)) form the BPL/LPL catalytic domain. ATP-binding positions include R71, 76 to 79 (GAVF), and K134. (R)-lipoate is bound at residue K134.

The protein belongs to the LplA family. In terms of assembly, monomer.

The protein resides in the cytoplasm. It carries out the reaction L-lysyl-[lipoyl-carrier protein] + (R)-lipoate + ATP = N(6)-[(R)-lipoyl]-L-lysyl-[lipoyl-carrier protein] + AMP + diphosphate + H(+). The protein operates within protein modification; protein lipoylation via exogenous pathway; protein N(6)-(lipoyl)lysine from lipoate: step 1/2. It participates in protein modification; protein lipoylation via exogenous pathway; protein N(6)-(lipoyl)lysine from lipoate: step 2/2. Catalyzes both the ATP-dependent activation of exogenously supplied lipoate to lipoyl-AMP and the transfer of the activated lipoyl onto the lipoyl domains of lipoate-dependent enzymes. This Escherichia coli O17:K52:H18 (strain UMN026 / ExPEC) protein is Lipoate-protein ligase A.